The following is a 200-amino-acid chain: TATA-box-binding protein 2 (200 aa).

2 consecutive repeat copies span residues 25–101 and 115–192.

This sequence belongs to the TBP family. As to quaternary structure, belongs to the TFIID complex together with the TBP-associated factors (TAFs). Binds DNA as monomer. Interacts with TAF1 (via N-terminus). Interacts with TFIIB1. Interacts with PTF2. Interacts with HAT5/ATHB-1 and ATHB-7. Component of a nuclear protein complex containing at least TATA binding proteins (TBPs, e.g. TBP1 and TBP2) and ATX1.

Its subcellular location is the nucleus. Its function is as follows. General transcription factor (GTF) that functions at the core of the DNA-binding multiprotein factor TFIID. Binding of TFIID to the TATA box is the initial transcriptional step of the pre-initiation complex (PIC), playing a role in the activation of eukaryotic genes transcribed by RNA polymerase II. Interacts with TFIIB1 and is required for activated transcription and possibly basal transcription. May act as GTF of RNA polymerase I-dependent transcription and rRNA synthesis. Forms a ternary complex with PBRP1 and the rDNA promoter region. This Arabidopsis thaliana (Mouse-ear cress) protein is TATA-box-binding protein 2.